The sequence spans 456 residues: Glycine--tRNA ligase (456 aa).

Positions 98 and 168 each coordinate substrate. Residues 200 to 202, 210 to 215, 285 to 286, and 329 to 332 contribute to the ATP site; these read RNE, FRTREF, EL, and GVER. 215–219 provides a ligand contact to substrate; that stretch reads FEQME. 325–329 contributes to the substrate binding site; that stretch reads EPSVG.

It belongs to the class-II aminoacyl-tRNA synthetase family. As to quaternary structure, homodimer.

It is found in the cytoplasm. It catalyses the reaction tRNA(Gly) + glycine + ATP = glycyl-tRNA(Gly) + AMP + diphosphate. Functionally, catalyzes the attachment of glycine to tRNA(Gly). The polypeptide is Glycine--tRNA ligase (Mycoplasma capricolum subsp. capricolum (strain California kid / ATCC 27343 / NCTC 10154)).